A 266-amino-acid chain; its full sequence is Histidinol-phosphatase (266 aa).

Mg(2+)-binding residues include Glu-69, Asp-84, Ile-86, and Asp-87. Glu-69 provides a ligand contact to substrate. Substrate is bound by residues 86–89, Arg-190, and Asp-218; that span reads IDGT. Asp-218 serves as a coordination point for Mg(2+).

The protein belongs to the inositol monophosphatase superfamily. The cofactor is Mg(2+).

The enzyme catalyses L-histidinol phosphate + H2O = L-histidinol + phosphate. The protein operates within amino-acid biosynthesis; L-histidine biosynthesis; L-histidine from 5-phospho-alpha-D-ribose 1-diphosphate: step 8/9. Catalyzes the dephosphorylation of histidinol-phosphate to histidinol, the direct precursor of histidine. The protein is Histidinol-phosphatase of Streptomyces coelicolor (strain ATCC BAA-471 / A3(2) / M145).